We begin with the raw amino-acid sequence, 355 residues long: MNRGANSASIPNDLILEILSRLPAKSTGRFRCVSKLWGSMLCHSYFTELFLTRSSARPRLLIGIHQDGDRFFFSCPQPQSPYDNSSIVLAADFHMKFGRVEDEWVYHILTLGTENVRWREIICPFSYDPPREKPICINGVLYYISVGSYYSLIGCFDVRSEKFKFLYLSPDCFPNWSRKLINYKGKLGVTIMEDYHGGFPLKLRMWVLEDVEKEEWTRYAYTLRPENKVEDNDYVYVVGATASGEIVLTKQNAYKPFYVFYFSPERNTLLSVEIQGVGEEWFYHNVYYFVDHVEDLRFDVMKTTYAGTSRSPPKQSTSTSSREDHEVRTLAHQKEDRLTFESVNQFDALRLLEDD.

Positions 4-49 constitute an F-box domain; the sequence is GANSASIPNDLILEILSRLPAKSTGRFRCVSKLWGSMLCHSYFTEL. Polar residues predominate over residues 306-320; the sequence is AGTSRSPPKQSTSTS. The segment at 306–333 is disordered; it reads AGTSRSPPKQSTSTSSREDHEVRTLAHQ. Residues 321–333 are compositionally biased toward basic and acidic residues; it reads SREDHEVRTLAHQ.

In Arabidopsis thaliana (Mouse-ear cress), this protein is F-box protein At1g31080.